A 204-amino-acid chain; its full sequence is Acyl-homoserine-lactone synthase (204 aa).

This sequence belongs to the autoinducer synthase family.

It carries out the reaction a fatty acyl-[ACP] + S-adenosyl-L-methionine = an N-acyl-L-homoserine lactone + S-methyl-5'-thioadenosine + holo-[ACP] + H(+). Required for the synthesis of acyl-HSL autoinducers that bind to SolR. This Ralstonia nicotianae (strain ATCC BAA-1114 / GMI1000) (Ralstonia solanacearum) protein is Acyl-homoserine-lactone synthase (solI).